The sequence spans 192 residues: Ciliary microtubule-associated protein 3 (192 aa).

In terms of assembly, interacts with proteins involved in ciliary transport, including ARL13B, CETN1, KIF3A, RAB6A, RAB8A, TUBB1 and TUBG1. Interacts with AURKA.

It localises to the cytoplasmic vesicle. Its subcellular location is the golgi apparatus. The protein resides in the trans-Golgi network. It is found in the cytoplasm. Functionally, during primary cilia disassembly, involved in cilia disassembly. Required specifically to control cilia retraction as well as the liberation and duplication of the basal body/centrosome. May act by stimulating AURKA activity at the basal body in a cell cycle-dependent manner. The polypeptide is Ciliary microtubule-associated protein 3 (CIMAP3) (Bos taurus (Bovine)).